Consider the following 562-residue polypeptide: Gut esterase 1 (562 aa).

The N-terminal stretch at 1-16 (MRVLLASLLIFGACWA) is a signal peptide. Cys-75 and Cys-93 form a disulfide bridge. Ser-199 functions as the Acyl-ester intermediate in the catalytic mechanism. Cys-251 and Cys-259 are joined by a disulfide. Residues Glu-320 and His-451 each act as charge relay system in the active site. Positions 559–562 (KDEL) match the Prevents secretion from ER motif.

This sequence belongs to the type-B carboxylesterase/lipase family. Expressed only in the intestine.

It localises to the endoplasmic reticulum lumen. The catalysed reaction is a carboxylic ester + H2O = an alcohol + a carboxylate + H(+). This Caenorhabditis briggsae protein is Gut esterase 1 (ges-1).